The following is a 217-amino-acid chain: Methylthioribulose-1-phosphate dehydratase (217 aa).

H106 and H108 together coordinate Zn(2+).

Belongs to the aldolase class II family. MtnB subfamily. Zn(2+) is required as a cofactor.

The catalysed reaction is 5-(methylsulfanyl)-D-ribulose 1-phosphate = 5-methylsulfanyl-2,3-dioxopentyl phosphate + H2O. It participates in amino-acid biosynthesis; L-methionine biosynthesis via salvage pathway; L-methionine from S-methyl-5-thio-alpha-D-ribose 1-phosphate: step 2/6. Functionally, catalyzes the dehydration of methylthioribulose-1-phosphate (MTRu-1-P) into 2,3-diketo-5-methylthiopentyl-1-phosphate (DK-MTP-1-P). This is Methylthioribulose-1-phosphate dehydratase from Xanthomonas campestris pv. campestris (strain B100).